The following is a 206-amino-acid chain: Large ribosomal subunit protein uL4 (206 aa).

Residues Thr47–Ala77 form a disordered region.

The protein belongs to the universal ribosomal protein uL4 family. In terms of assembly, part of the 50S ribosomal subunit.

One of the primary rRNA binding proteins, this protein initially binds near the 5'-end of the 23S rRNA. It is important during the early stages of 50S assembly. It makes multiple contacts with different domains of the 23S rRNA in the assembled 50S subunit and ribosome. In terms of biological role, forms part of the polypeptide exit tunnel. The protein is Large ribosomal subunit protein uL4 of Nitrosomonas europaea (strain ATCC 19718 / CIP 103999 / KCTC 2705 / NBRC 14298).